The following is a 399-amino-acid chain: Elongation factor Tu (399 aa).

Residues 10–204 (KPHVNIGTIG…AVDASIPEPE (195 aa)) form the tr-type G domain. The interval 19 to 26 (GHVDHGKT) is G1. 19–26 (GHVDHGKT) provides a ligand contact to GTP. Threonine 26 is a binding site for Mg(2+). Residues 60 to 64 (GITIN) form a G2 region. Residues 81–84 (DCPG) form a G3 region. Residues 81–85 (DCPGH) and 136–139 (NKCD) contribute to the GTP site. Residues 136–139 (NKCD) form a G4 region. The segment at 174–176 (SGL) is G5.

This sequence belongs to the TRAFAC class translation factor GTPase superfamily. Classic translation factor GTPase family. EF-Tu/EF-1A subfamily. Monomer.

Its subcellular location is the cytoplasm. It catalyses the reaction GTP + H2O = GDP + phosphate + H(+). Its function is as follows. GTP hydrolase that promotes the GTP-dependent binding of aminoacyl-tRNA to the A-site of ribosomes during protein biosynthesis. This chain is Elongation factor Tu, found in Synechococcus sp. (strain CC9311).